The chain runs to 223 residues: Deoxyribose-phosphate aldolase (223 aa).

Residue D92 is the Proton donor/acceptor of the active site. K153 functions as the Schiff-base intermediate with acetaldehyde in the catalytic mechanism. K182 (proton donor/acceptor) is an active-site residue.

It belongs to the DeoC/FbaB aldolase family. DeoC type 1 subfamily.

It is found in the cytoplasm. The catalysed reaction is 2-deoxy-D-ribose 5-phosphate = D-glyceraldehyde 3-phosphate + acetaldehyde. It participates in carbohydrate degradation; 2-deoxy-D-ribose 1-phosphate degradation; D-glyceraldehyde 3-phosphate and acetaldehyde from 2-deoxy-alpha-D-ribose 1-phosphate: step 2/2. Its function is as follows. Catalyzes a reversible aldol reaction between acetaldehyde and D-glyceraldehyde 3-phosphate to generate 2-deoxy-D-ribose 5-phosphate. The protein is Deoxyribose-phosphate aldolase of Mycoplasmoides gallisepticum (strain R(low / passage 15 / clone 2)) (Mycoplasma gallisepticum).